The following is a 135-amino-acid chain: Large ribosomal subunit protein bL19 (135 aa).

It belongs to the bacterial ribosomal protein bL19 family.

In terms of biological role, this protein is located at the 30S-50S ribosomal subunit interface and may play a role in the structure and function of the aminoacyl-tRNA binding site. This chain is Large ribosomal subunit protein bL19, found in Xanthomonas axonopodis pv. citri (strain 306).